A 121-amino-acid chain; its full sequence is MSITKDQIIEAVASMSVMEVVELITAMEEKFGVSAAAVAAGPAAAAEAVEEQTEFNVMLTAIGANKVAVIKAVRAATSLGLKEAKDLVEAAPTAVKEAVSKDEAEALKKELEAAGASVEIK.

This sequence belongs to the bacterial ribosomal protein bL12 family. In terms of assembly, homodimer. Part of the ribosomal stalk of the 50S ribosomal subunit. Forms a multimeric L10(L12)X complex, where L10 forms an elongated spine to which 2 to 4 L12 dimers bind in a sequential fashion. Binds GTP-bound translation factors.

In terms of biological role, forms part of the ribosomal stalk which helps the ribosome interact with GTP-bound translation factors. Is thus essential for accurate translation. This chain is Large ribosomal subunit protein bL12, found in Tolumonas auensis (strain DSM 9187 / NBRC 110442 / TA 4).